Reading from the N-terminus, the 313-residue chain is Ribosomal RNA small subunit methyltransferase H (313 aa).

Residues 35 to 37, Asp-55, Phe-79, Asp-101, and Gln-108 each bind S-adenosyl-L-methionine; that span reads GGH.

Belongs to the methyltransferase superfamily. RsmH family.

The protein resides in the cytoplasm. It carries out the reaction cytidine(1402) in 16S rRNA + S-adenosyl-L-methionine = N(4)-methylcytidine(1402) in 16S rRNA + S-adenosyl-L-homocysteine + H(+). In terms of biological role, specifically methylates the N4 position of cytidine in position 1402 (C1402) of 16S rRNA. The polypeptide is Ribosomal RNA small subunit methyltransferase H (Salmonella arizonae (strain ATCC BAA-731 / CDC346-86 / RSK2980)).